A 336-amino-acid chain; its full sequence is Fructose-1,6-bisphosphatase class 1 (336 aa).

Residues glutamate 92, aspartate 115, leucine 117, and aspartate 118 each coordinate Mg(2+). Residues 118–121 (DGSS), asparagine 211, tyrosine 244, 262–264 (YLY), and lysine 274 each bind substrate. Residue glutamate 280 participates in Mg(2+) binding.

This sequence belongs to the FBPase class 1 family. Homotetramer. Requires Mg(2+) as cofactor.

It localises to the cytoplasm. It catalyses the reaction beta-D-fructose 1,6-bisphosphate + H2O = beta-D-fructose 6-phosphate + phosphate. It participates in carbohydrate biosynthesis; gluconeogenesis. The chain is Fructose-1,6-bisphosphatase class 1 from Aliivibrio fischeri (strain ATCC 700601 / ES114) (Vibrio fischeri).